The following is a 381-amino-acid chain: MNQFTLPVWVVAAAKSATNILIGNKFRDKERIDLPNNEKSISVPISSSALLDNGKRSLAVSHCQSGLPLDITRGVEIWAYIQLSKGGFQSKGKVRNGFPDWLDFHAGYGVGKFQSSGQPCISQFARDLLCINLYPLLPKGSSIKVEIILPEGKDRASKTSNEAFGVVDGLSLIGTQAEVQISASPDQLKNTKELLHHKCSEAKFDGCLTFVIGENGMDLAMKYGLPANQIIKTGNWLGPLLVAAAENGVKKLLLFGYHGKLIKLSGGVFHTHHHLADGRIEILTSIAFREGISFDLIELISKSTSVENALLTLEVSNPEAVSLIWSRMAKEIEIKSRSYVNRYLSSSMEIGSVLFDRKRQMRWAGLEGLKQINSLGLILKR.

Belongs to the CbiD family.

It carries out the reaction Co-precorrin-5B + S-adenosyl-L-methionine = Co-precorrin-6A + S-adenosyl-L-homocysteine. The protein operates within cofactor biosynthesis; adenosylcobalamin biosynthesis; cob(II)yrinate a,c-diamide from sirohydrochlorin (anaerobic route): step 6/10. Functionally, catalyzes the methylation of C-1 in cobalt-precorrin-5B to form cobalt-precorrin-6A. The protein is Cobalt-precorrin-5B C(1)-methyltransferase of Prochlorococcus marinus (strain NATL2A).